A 450-amino-acid polypeptide reads, in one-letter code: Phosphoglucosamine mutase (450 aa).

Ser101 serves as the catalytic Phosphoserine intermediate. Residues Ser101, Asp241, Asp243, and Asp245 each coordinate Mg(2+). Ser101 carries the post-translational modification Phosphoserine.

The protein belongs to the phosphohexose mutase family. Mg(2+) is required as a cofactor. In terms of processing, activated by phosphorylation.

It catalyses the reaction alpha-D-glucosamine 1-phosphate = D-glucosamine 6-phosphate. Its function is as follows. Catalyzes the conversion of glucosamine-6-phosphate to glucosamine-1-phosphate. In Listeria monocytogenes serovar 1/2a (strain ATCC BAA-679 / EGD-e), this protein is Phosphoglucosamine mutase.